The chain runs to 754 residues: 5-methyltetrahydropteroyltriglutamate--homocysteine methyltransferase (754 aa).

5-methyltetrahydropteroyltri-L-glutamate is bound by residues 17-20 and Lys117; that span reads RELK. Residues 431-433 and Glu484 each bind L-homocysteine; that span reads IGS. Residues 431-433 and Glu484 contribute to the L-methionine site; that span reads IGS. 5-methyltetrahydropteroyltri-L-glutamate contacts are provided by residues 515–516 and Trp561; that span reads RC. Asp599 is an L-homocysteine binding site. Position 599 (Asp599) interacts with L-methionine. Glu605 provides a ligand contact to 5-methyltetrahydropteroyltri-L-glutamate. The Zn(2+) site is built by His641, Cys643, and Glu665. His694 (proton donor) is an active-site residue. Residue Cys726 participates in Zn(2+) binding.

It belongs to the vitamin-B12 independent methionine synthase family. Zn(2+) is required as a cofactor.

The catalysed reaction is 5-methyltetrahydropteroyltri-L-glutamate + L-homocysteine = tetrahydropteroyltri-L-glutamate + L-methionine. It participates in amino-acid biosynthesis; L-methionine biosynthesis via de novo pathway; L-methionine from L-homocysteine (MetE route): step 1/1. Catalyzes the transfer of a methyl group from 5-methyltetrahydrofolate to homocysteine resulting in methionine formation. The protein is 5-methyltetrahydropteroyltriglutamate--homocysteine methyltransferase of Salmonella arizonae (strain ATCC BAA-731 / CDC346-86 / RSK2980).